Here is a 538-residue protein sequence, read N- to C-terminus: Calcium-dependent protein kinase 3 (538 aa).

The segment at 23-70 (PKKSIERIKKKKDSNKSIKSQHKFEGSKISNKNNELKDVKSKDPKNYE) is disordered. The segment covering 56 to 68 (NELKDVKSKDPKN) has biased composition (basic and acidic residues). The 256-residue stretch at 112–367 (NLSEEPLGKG…ASEALKHPWF (256 aa)) folds into the Protein kinase domain. Residues 118-126 (LGKGTYGCV) and Lys-141 each bind ATP. Asp-232 functions as the Proton acceptor in the catalytic mechanism. The short motif at 387–395 (NFKNYALLL) is the J domain autoinhibitory motif element. The interval 387 to 422 (NFKNYALLLKLQKLAMTIIAQQSNDYDLQQLKAVFL) is j domain. The J domain EF-hand interaction motif motif lies at 396 to 405 (KLQKLAMTII). EF-hand domains lie at 412–447 (YDLQ…SGLK), 450–481 (QNFD…DRKH), and 482–517 (LSKK…VILF). 10 residues coordinate Ca(2+): Asp-460, Asp-462, Ser-464, Arg-466, Glu-471, Asp-495, Asp-497, Asp-499, Glu-501, and Glu-506.

This sequence belongs to the protein kinase superfamily. Ser/Thr protein kinase family. CDPK subfamily. Requires Mg(2+) as cofactor.

The protein localises to the cytoplasm. The enzyme catalyses L-seryl-[protein] + ATP = O-phospho-L-seryl-[protein] + ADP + H(+). It carries out the reaction L-threonyl-[protein] + ATP = O-phospho-L-threonyl-[protein] + ADP + H(+). Its activity is regulated as follows. Activated by calcium. Upon calcium binding to the EF-hand domain 2, the C-terminus of the junction domain (J domain) undergoes a conformational change which results in the dissociation of the pseudo-substrate inhibitory motif from the catalytic domain. This, in turn, may facilitate the autophosphorylation of the activation loop at Thr-273, which leads to the kinase activation. Functionally, calcium-dependent protein kinase which acts as a sensor and effector of intracellular Ca(2+) levels probably in part downstream of cGMP-activated PKG kinase. In the mosquito midgut, regulates the gliding motility of the ookinete which is essential for the ookinete to invade the midgut epithelium. However, another study showed that while required for ookinete invasion of the midgut epithelium, is not required for ookinete gliding motility. The protein is Calcium-dependent protein kinase 3 of Plasmodium yoelii yoelii.